A 150-amino-acid polypeptide reads, in one-letter code: Transcriptional repressor NrdR (150 aa).

Residues 3–34 fold into a zinc finger; that stretch reads CPFCQHDHSKVIDSRVIDAGSAIRRRRECSKC. The region spanning 46-136 is the ATP-cone domain; that stretch reads LLVVKRNGVT…VYKSFDSADD (91 aa).

Belongs to the NrdR family. Zn(2+) is required as a cofactor.

In terms of biological role, negatively regulates transcription of bacterial ribonucleotide reductase nrd genes and operons by binding to NrdR-boxes. In Corynebacterium glutamicum (strain ATCC 13032 / DSM 20300 / JCM 1318 / BCRC 11384 / CCUG 27702 / LMG 3730 / NBRC 12168 / NCIMB 10025 / NRRL B-2784 / 534), this protein is Transcriptional repressor NrdR.